The primary structure comprises 249 residues: 2,3-bisphosphoglycerate-dependent phosphoglycerate mutase (249 aa).

Substrate contacts are provided by residues 11-18, 24-25, Arg63, 90-93, Lys101, 117-118, and 184-185; these read RHGESDWN, TG, ERHY, RR, and GN. The active-site Tele-phosphohistidine intermediate is the His12. The active-site Proton donor/acceptor is Glu90.

Belongs to the phosphoglycerate mutase family. BPG-dependent PGAM subfamily.

It catalyses the reaction (2R)-2-phosphoglycerate = (2R)-3-phosphoglycerate. It functions in the pathway carbohydrate degradation; glycolysis; pyruvate from D-glyceraldehyde 3-phosphate: step 3/5. Functionally, catalyzes the interconversion of 2-phosphoglycerate and 3-phosphoglycerate. The sequence is that of 2,3-bisphosphoglycerate-dependent phosphoglycerate mutase from Mycobacterium bovis (strain BCG / Pasteur 1173P2).